Reading from the N-terminus, the 97-residue chain is DNA replication protein 1 (97 aa).

The stretch at 49 to 78 forms a coiled coil; that stretch reads IELEKKMTKLEHENKLMKNALYELSRMENN.

The protein belongs to the phi29likevirus DNA replication protein 1 family. In terms of assembly, homomultimer. Self-associates into large complexes forming long filamentous structures. Interacts (via N-terminus) with the primer terminal protein.

The protein localises to the host membrane. Functionally, protein that assembles into highly ordered structures and provides a specific site for viral DNA replication. Probably anchors the viral DNA replisome to the host membrane. This chain is DNA replication protein 1 (1C), found in Bacillus subtilis (Bacteriophage PZA).